Consider the following 206-residue polypeptide: Urease accessory protein UreE (206 aa).

A disordered region spans residues 136–206 (PEGGAYAEPS…HGHAHAHDRK (71 aa)). Basic and acidic residues-rich tracts occupy residues 148–169 (QGHD…GGHE) and 177–191 (HGHA…EHCG). The span at 192-206 (HGHHHHGHAHAHDRK) shows a compositional bias: basic residues.

Belongs to the UreE family.

It is found in the cytoplasm. Its function is as follows. Involved in urease metallocenter assembly. Binds nickel. Probably functions as a nickel donor during metallocenter assembly. The sequence is that of Urease accessory protein UreE from Bradyrhizobium sp. (strain BTAi1 / ATCC BAA-1182).